Here is a 989-residue protein sequence, read N- to C-terminus: Voltage-gated delayed rectifier potassium channel KCNH1 (989 aa).

At 1–220 (MTMAGGRRGL…LHYCVFKTTW (220 aa)) the chain is on the cytoplasmic side. Residues 14 to 94 (QNTFLENIVR…QTFENYEMNS (81 aa)) form the PAS domain. Residues 93–145 (NSFEILMYKKNRTPVWFFVKIAPIRNEQDKVVLFLCTFSDITAFKQPIEDDSC) form the PAC domain. The interval 151–162 (FARLTRALTSSR) is required for phosphatidylinositol bisphosphate binding. The chain crosses the membrane as a helical span at residues 221 to 241 (DWIILILTFYTAILVPYNVSF). At 242–248 (KTRQNNV) the chain is on the extracellular side. The chain crosses the membrane as a helical span at residues 249–269 (AWLVVDSIVDVIFLVDIVLNF). At 270–290 (HTTFVGPAGEVISDPKLIRMN) the chain is on the cytoplasmic side. The chain crosses the membrane as a helical span at residues 291-309 (YLKTWFVIDLLSCLPYDVI). Topologically, residues 310–345 (NAFENVDEVSAFMGDPGKIGFADQIPPPLEGRESQG) are extracellular. The helical; Voltage-sensor transmembrane segment at 346 to 368 (ISSLFSSLKVVRLLRLGRVARKL) threads the bilayer. At 369–377 (DHYIEYGAA) the chain is on the cytoplasmic side. The chain crosses the membrane as a helical span at residues 378 to 399 (VLVLLVCVFGLAAHWMACIWYS). Over 400–448 (IGDYEIFDEDTKTIRNNSWLYQLAMDIGTPYQFNGSGSGKWEGGPSKNS) the chain is Extracellular. N-linked (GlcNAc...) asparagine glycans are attached at residues asparagine 415 and asparagine 433. The segment at residues 449-470 (VYISSLYFTMTSLTSVGFGNIA) is an intramembrane region (pore-forming). Residues 463-468 (SVGFGN) carry the Selectivity filter motif. Over 471–477 (PSTDIEK) the chain is Extracellular. A helical membrane pass occupies residues 478 to 498 (IFAVAIMMIGSLLYATIFGNV). Topologically, residues 499–989 (TTIFQQMYAN…ESERDIFGAS (491 aa)) are cytoplasmic. The interval 673-770 (KRDALQKVLE…LDDLDVEKGN (98 aa)) is calmodulin-binding. An interaction with cyclic nucleotide-binding pocket region spans residues 699–701 (YNL). The span at 855-879 (KAESMETLPERTKASGEATLKKTDS) shows a compositional bias: basic and acidic residues. Disordered regions lie at residues 855-886 (KAES…GITK) and 962-989 (RSSQ…FGAS). Residues 924–964 (ATVLEVRHELKEDIKALNAKMTNIEKQLSEILRILTSRRSS) form a CAD (involved in subunit assembly) region. Serine 974, serine 978, and serine 981 each carry phosphoserine. Positions 980-989 (ESERDIFGAS) are enriched in basic and acidic residues.

This sequence belongs to the potassium channel family. H (Eag) (TC 1.A.1.20) subfamily. Kv10.1/KCNH1 sub-subfamily. In terms of assembly, homomultimer. The potassium channel is composed of a homo- or heterotetrameric complex of pore-forming alpha subunits that can associate with modulating beta subunits. Heteromultimer with KCNH5/EAG2. Interacts with ALG10B. Interacts with RABEP1. Interacts (via C-terminus) with CTTN. Interacts (via C-terminal cytoplasmic region) with Ca(2+)-bound calmodulin. Interacts with the spider kappa-theraphotoxin-Aa1a and mu/kappa-theraphotoxin-Ap1a. Post-translationally, channel activity is regulated via tyrosine phosphorylation/dephosphorylation by SRC and PTPN6. Highly expressed in brain and in myoblasts at the onset of fusion, but not in other tissues. Detected in HeLa (cervical carcinoma), SH-SY5Y (neuroblastoma) and MCF-7 (epithelial tumor) cells, but not in normal epithelial cells.

It localises to the cell membrane. It is found in the nucleus inner membrane. The protein localises to the cell projection. Its subcellular location is the dendrite. The protein resides in the axon. It localises to the presynaptic cell membrane. It is found in the perikaryon. The protein localises to the postsynaptic density membrane. Its subcellular location is the early endosome membrane. It catalyses the reaction K(+)(in) = K(+)(out). Channel activity is inhibited by interaction with Ca(2+)-bound calmodulin. Interaction of a single pore-forming alpha subunit with a calmodulin chain is sufficient to promote channel closure. Channel activity is not regulated by cyclic nucleotides. Channel activity is inhibited by binding intracellular phosphatidylinositol-3,5-bisphosphate and phosphatidylinositol-4,5-bisphosphate (PIP2), but is not inhibited by phosphatidylinositol 4-phosphate. Inhibited by the spider kappa-theraphotoxin-Aa1a and mu/kappa-theraphotoxin-Ap1a. Functionally, pore-forming (alpha) subunit of a voltage-gated delayed rectifier potassium channel that mediates outward-rectifying potassium currents which, on depolarization, reaches a steady-state level and do not inactivate. The activation kinetics depend on the prepulse potential and external divalent cation concentration. With negative prepulses, the current activation is delayed and slowed down several fold, whereas more positive prepulses speed up activation. The time course of activation is biphasic with a fast and a slowly activating current component. Activates at more positive membrane potentials and exhibit a steeper activation curve. Channel properties are modulated by subunit assembly. Mediates IK(NI) current in myoblasts. Involved in the regulation of cell proliferation and differentiation, in particular adipogenic and osteogenic differentiation in bone marrow-derived mesenchymal stem cells (MSCs). The protein is Voltage-gated delayed rectifier potassium channel KCNH1 of Homo sapiens (Human).